The chain runs to 396 residues: Queuine tRNA-ribosyltransferase catalytic subunit 1 (396 aa).

Catalysis depends on Asp99, which acts as the Proton acceptor. Residues 99 to 103, Asp153, Gln196, and Gly223 each bind queuine; that span reads DSGGF. The segment at 254–260 is RNA binding; sequence GVGYATD. The active-site Nucleophile is Asp273. The RNA binding; important for wobble base 34 recognition stretch occupies residues 278–282; the sequence is TRTAR. Positions 311, 313, 316, and 341 each coordinate Zn(2+).

The protein belongs to the queuine tRNA-ribosyltransferase family. As to quaternary structure, heterodimer of a catalytic subunit qtrt1 and an accessory subunit qtrt2. The cofactor is Zn(2+).

The protein resides in the cytoplasm. Its subcellular location is the mitochondrion outer membrane. It carries out the reaction guanosine(34) in tRNA + queuine = queuosine(34) in tRNA + guanine. In terms of biological role, catalytic subunit of the queuine tRNA-ribosyltransferase (TGT) that catalyzes the base-exchange of a guanine (G) residue with queuine (Q) at position 34 (anticodon wobble position) in tRNAs with GU(N) anticodons (tRNA-Asp, -Asn, -His and -Tyr), resulting in the hypermodified nucleoside queuosine (7-(((4,5-cis-dihydroxy-2-cyclopenten-1-yl)amino)methyl)-7-deazaguanosine). Catalysis occurs through a double-displacement mechanism. The nucleophile active site attacks the C1' of nucleotide 34 to detach the guanine base from the RNA, forming a covalent enzyme-RNA intermediate. The proton acceptor active site deprotonates the incoming queuine, allowing a nucleophilic attack on the C1' of the ribose to form the product. This chain is Queuine tRNA-ribosyltransferase catalytic subunit 1, found in Xenopus laevis (African clawed frog).